The sequence spans 239 residues: Glycerol-3-phosphate acyltransferase (239 aa).

6 consecutive transmembrane segments (helical) span residues 6-26, 61-81, 99-119, 135-155, 159-179, and 199-219; these read AIAL…SVMF, FLVG…SFLI, YYLT…PLYF, LAIS…VTLI, VSLA…VPWL, and WYII…VFWL.

Belongs to the PlsY family. In terms of assembly, probably interacts with PlsX.

Its subcellular location is the cell membrane. The enzyme catalyses an acyl phosphate + sn-glycerol 3-phosphate = a 1-acyl-sn-glycero-3-phosphate + phosphate. It participates in lipid metabolism; phospholipid metabolism. In terms of biological role, catalyzes the transfer of an acyl group from acyl-phosphate (acyl-PO(4)) to glycerol-3-phosphate (G3P) to form lysophosphatidic acid (LPA). This enzyme utilizes acyl-phosphate as fatty acyl donor, but not acyl-CoA or acyl-ACP. The polypeptide is Glycerol-3-phosphate acyltransferase (Mycoplasma pneumoniae (strain ATCC 29342 / M129 / Subtype 1) (Mycoplasmoides pneumoniae)).